The following is a 539-amino-acid chain: Glutamyl-tRNA(Gln) amidotransferase subunit A, mitochondrial (539 aa).

Catalysis depends on charge relay system residues K94 and S181. The active-site Acyl-ester intermediate is S205.

Belongs to the amidase family. GatA subfamily. In terms of assembly, subunit of the heterotrimeric GatCAB amidotransferase (AdT) complex, composed of A, B and C subunits.

The protein resides in the mitochondrion. The enzyme catalyses L-glutamyl-tRNA(Gln) + L-glutamine + ATP + H2O = L-glutaminyl-tRNA(Gln) + L-glutamate + ADP + phosphate + H(+). Its function is as follows. Allows the formation of correctly charged Gln-tRNA(Gln) through the transamidation of misacylated Glu-tRNA(Gln) in the mitochondria. The reaction takes place in the presence of glutamine and ATP through an activated gamma-phospho-Glu-tRNA(Gln). This is Glutamyl-tRNA(Gln) amidotransferase subunit A, mitochondrial from Mycosarcoma maydis (Corn smut fungus).